The primary structure comprises 293 residues: Pyridoxal 5'-phosphate synthase subunit PdxS (293 aa).

Asp-23 serves as a coordination point for D-ribose 5-phosphate. The active-site Schiff-base intermediate with D-ribose 5-phosphate is the Lys-80. Residue Gly-152 coordinates D-ribose 5-phosphate. Arg-164 is a D-glyceraldehyde 3-phosphate binding site. D-ribose 5-phosphate is bound by residues Gly-213 and 234–235 (GS).

It belongs to the PdxS/SNZ family. In the presence of PdxT, forms a dodecamer of heterodimers.

The catalysed reaction is aldehydo-D-ribose 5-phosphate + D-glyceraldehyde 3-phosphate + L-glutamine = pyridoxal 5'-phosphate + L-glutamate + phosphate + 3 H2O + H(+). The protein operates within cofactor biosynthesis; pyridoxal 5'-phosphate biosynthesis. In terms of biological role, catalyzes the formation of pyridoxal 5'-phosphate from ribose 5-phosphate (RBP), glyceraldehyde 3-phosphate (G3P) and ammonia. The ammonia is provided by the PdxT subunit. Can also use ribulose 5-phosphate and dihydroxyacetone phosphate as substrates, resulting from enzyme-catalyzed isomerization of RBP and G3P, respectively. This chain is Pyridoxal 5'-phosphate synthase subunit PdxS, found in Chloroflexus aggregans (strain MD-66 / DSM 9485).